Reading from the N-terminus, the 117-residue chain is MNNIIKMLNEEQMKQDVPEFGAGDTVVVKVRVVEGGKERLQAFEGVVIAKRNRGVHSAFTVRKISNGEGVERAFQIHSPIISSIEVKRRGRVRRAKLYYLRERSGKSARIREKLATK.

Belongs to the bacterial ribosomal protein bL19 family.

This protein is located at the 30S-50S ribosomal subunit interface and may play a role in the structure and function of the aminoacyl-tRNA binding site. This is Large ribosomal subunit protein bL19 from Shewanella sediminis (strain HAW-EB3).